A 571-amino-acid chain; its full sequence is Urease subunit alpha (571 aa).

The Urease domain occupies 129–571; it reads GGIDTHIHFI…LPMAQRYFLF (443 aa). Residues histidine 134, histidine 136, and lysine 217 each coordinate Ni(2+). Lysine 217 carries the post-translational modification N6-carboxylysine. Position 219 (histidine 219) interacts with substrate. The Ni(2+) site is built by histidine 246 and histidine 272. The Proton donor role is filled by histidine 320. Aspartate 360 provides a ligand contact to Ni(2+).

Belongs to the metallo-dependent hydrolases superfamily. Urease alpha subunit family. In terms of assembly, heterotrimer of UreA (gamma), UreB (beta) and UreC (alpha) subunits. Three heterotrimers associate to form the active enzyme. It depends on Ni cation as a cofactor. Post-translationally, carboxylation allows a single lysine to coordinate two nickel ions.

Its subcellular location is the cytoplasm. It catalyses the reaction urea + 2 H2O + H(+) = hydrogencarbonate + 2 NH4(+). The protein operates within nitrogen metabolism; urea degradation; CO(2) and NH(3) from urea (urease route): step 1/1. In Cupriavidus pinatubonensis (strain JMP 134 / LMG 1197) (Cupriavidus necator (strain JMP 134)), this protein is Urease subunit alpha.